A 953-amino-acid chain; its full sequence is Isoleucine--tRNA ligase (953 aa).

Positions 58–68 (PYANGSIHIGH) match the 'HIGH' region motif. An L-isoleucyl-5'-AMP-binding site is contributed by Glu577. The 'KMSKS' region signature appears at 618–622 (KMSKS). ATP is bound at residue Lys621. The Zn(2+) site is built by Cys916, Cys919, Cys936, and Cys939.

This sequence belongs to the class-I aminoacyl-tRNA synthetase family. IleS type 1 subfamily. In terms of assembly, monomer. Requires Zn(2+) as cofactor.

It localises to the cytoplasm. The catalysed reaction is tRNA(Ile) + L-isoleucine + ATP = L-isoleucyl-tRNA(Ile) + AMP + diphosphate. In terms of biological role, catalyzes the attachment of isoleucine to tRNA(Ile). As IleRS can inadvertently accommodate and process structurally similar amino acids such as valine, to avoid such errors it has two additional distinct tRNA(Ile)-dependent editing activities. One activity is designated as 'pretransfer' editing and involves the hydrolysis of activated Val-AMP. The other activity is designated 'posttransfer' editing and involves deacylation of mischarged Val-tRNA(Ile). The chain is Isoleucine--tRNA ligase from Aeromonas salmonicida (strain A449).